The sequence spans 151 residues: Deoxyuridine 5'-triphosphate nucleotidohydrolase (151 aa).

Residues 70–72, Asn-83, 87–89, and Met-97 contribute to the substrate site; these read RSG and LID.

It belongs to the dUTPase family. Mg(2+) serves as cofactor.

The enzyme catalyses dUTP + H2O = dUMP + diphosphate + H(+). Its pathway is pyrimidine metabolism; dUMP biosynthesis; dUMP from dCTP (dUTP route): step 2/2. Its function is as follows. This enzyme is involved in nucleotide metabolism: it produces dUMP, the immediate precursor of thymidine nucleotides and it decreases the intracellular concentration of dUTP so that uracil cannot be incorporated into DNA. This Histophilus somni (strain 129Pt) (Haemophilus somnus) protein is Deoxyuridine 5'-triphosphate nucleotidohydrolase.